A 254-amino-acid chain; its full sequence is Ribosomal RNA small subunit methyltransferase J (254 aa).

S-adenosyl-L-methionine-binding positions include R107–D108, E123–R124, and D174.

The protein belongs to the methyltransferase superfamily. RsmJ family.

It is found in the cytoplasm. The enzyme catalyses guanosine(1516) in 16S rRNA + S-adenosyl-L-methionine = N(2)-methylguanosine(1516) in 16S rRNA + S-adenosyl-L-homocysteine + H(+). Its function is as follows. Specifically methylates the guanosine in position 1516 of 16S rRNA. This Coxiella burnetii (strain CbuK_Q154) (Coxiella burnetii (strain Q154)) protein is Ribosomal RNA small subunit methyltransferase J.